A 110-amino-acid chain; its full sequence is Eukaryotic translation initiation factor eIF1 (110 aa).

Belongs to the SUI1 family.

Functionally, probably involved in translation. The chain is Eukaryotic translation initiation factor eIF1 from Anopheles gambiae (African malaria mosquito).